A 552-amino-acid chain; its full sequence is Glutamyl-tRNA reductase 1, chloroplastic (552 aa).

Residues 150–153 (TCNR), Ser210, 215–217 (EGQ), and Gln221 each bind substrate. The active-site Nucleophile is the Cys151. NADP(+) is bound at residue 292–297 (GAGKMG).

It belongs to the glutamyl-tRNA reductase family. As to expression, primarily in cotyledons and hypocotyls of greening cucumber seedlings.

Its subcellular location is the plastid. It is found in the chloroplast. The catalysed reaction is (S)-4-amino-5-oxopentanoate + tRNA(Glu) + NADP(+) = L-glutamyl-tRNA(Glu) + NADPH + H(+). It functions in the pathway porphyrin-containing compound metabolism; protoporphyrin-IX biosynthesis; 5-aminolevulinate from L-glutamyl-tRNA(Glu): step 1/2. Its function is as follows. Catalyzes the NADPH-dependent reduction of glutamyl-tRNA(Glu) to glutamate 1-semialdehyde (GSA). This Cucumis sativus (Cucumber) protein is Glutamyl-tRNA reductase 1, chloroplastic (HEMA1).